We begin with the raw amino-acid sequence, 229 residues long: Flagellar L-ring protein (229 aa).

The signal sequence occupies residues 1–20; it reads MLKTVLRLPVCAALLALAAG. Cys21 carries N-palmitoyl cysteine lipidation. Cys21 carries the S-diacylglycerol cysteine lipid modification.

Belongs to the FlgH family. As to quaternary structure, the basal body constitutes a major portion of the flagellar organelle and consists of four rings (L,P,S, and M) mounted on a central rod.

The protein localises to the cell outer membrane. Its subcellular location is the bacterial flagellum basal body. Functionally, assembles around the rod to form the L-ring and probably protects the motor/basal body from shearing forces during rotation. The chain is Flagellar L-ring protein from Bordetella pertussis (strain Tohama I / ATCC BAA-589 / NCTC 13251).